A 1488-amino-acid polypeptide reads, in one-letter code: DNA polymerase alpha catalytic subunit (1488 aa).

3 disordered regions span residues 1–22, 79–124, and 236–325; these read MSES…GRFA, LRDF…TGKA, and FFSS…ESED. The span at 83 to 93 shows a compositional bias: acidic residues; sequence FEDEDEYSDGE. Residues 96 to 103 carry the Nuclear localization signal motif; it reads RKDSKKKK. Basic residues predominate over residues 99–113; it reads SKKKKGVAPNSKKRP. Residue S239 is modified to Phosphoserine. Residues 242–258 are compositionally biased toward basic and acidic residues; it reads IKKEPMPEKTPAKKATE. The segment covering 260 to 278 has biased composition (acidic residues); the sequence is PFSDNEMDFSCLDDDENQF. A phosphoserine mark is found at S262 and S269. The span at 286-303 shows a compositional bias: polar residues; that stretch reads TEKVSQTKTAAEKTSQSK. Residues 304 to 325 show a composition bias toward basic and acidic residues; sequence VAEKSAPKKETTGSPKESESED. A Phosphothreonine modification is found at T314. Residue S317 is modified to Phosphoserine. Residues 638 to 758 are contains conserved residues essential for 3' -&gt; 5' exonuclease activities; it reads DSERALLSWF…DLLEMYEKGE (121 aa). 2 DNA-binding regions span residues 675-734 and 1255-1380; these read QIVA…CKQV and PTKF…RKKS. Positions 1296, 1299, 1324, 1329, 1362, 1367, 1385, and 1388 each coordinate Zn(2+). The CysA-type zinc finger occupies 1296–1327; that stretch reads CVTCKTEQLMASAYRPGPSNSHIAVLQQCAKS. A CysB motif motif is present at residues 1362–1388; that stretch reads CDHPDCNFNTRTHSLRKKSHRPLCQKC.

This sequence belongs to the DNA polymerase type-B family. Component of the alpha DNA polymerase complex (also known as the alpha DNA polymerase-primase complex) consisting of four subunits: the catalytic subunit PolA1, the regulatory subunit PolA2, and the primase complex subunits Prim1 and Prim2 respectively. PolA1 associates with the DNA primase complex before association with PolA2. Interacts with Dpit47; the interaction inhibits the activity of the DNA polymerase and occurs only in proliferating cells but not in quiescent cells. In embryos, a cleaved form of 130 kDa is produced up to cycle 14 and then disappears. In terms of tissue distribution, expressed in embryos (at protein level).

Its subcellular location is the nucleus. The catalysed reaction is DNA(n) + a 2'-deoxyribonucleoside 5'-triphosphate = DNA(n+1) + diphosphate. Its activity is regulated as follows. Inhibited by N2-(p-n-butylphenyl) deoxyguanosine 5'-triphosphate and N2-(p-n-butylphenyl) deoxyadenosine 5'-triphosphate. DNA synthesis is not inhibited by fungal toxin alpha-amaitin. The 3'-5' exonuclease activity is inhibited by 10mM dGMP. Functionally, catalytic subunit of the DNA polymerase alpha complex (also known as the alpha DNA polymerase-primase complex) which plays an essential role in the initiation of DNA synthesis. During the S phase of the cell cycle, the DNA polymerase alpha complex (composed of a catalytic subunit PolA1, an accessory subunit PolA2 and two primase subunits, the catalytic subunit Prim1 and the regulatory subunit Prim2) is recruited to DNA at the replicative forks. The primase subunit of the polymerase alpha complex initiates DNA synthesis by oligomerising short RNA primers on both leading and lagging strands. These primers are initially extended by the polymerase alpha catalytic subunit and subsequently transferred to polymerase delta and polymerase epsilon for processive synthesis on the lagging and leading strand, respectively. In addition to polymerase activity, exhibits 3' to 5' exonuclease activity. The chain is DNA polymerase alpha catalytic subunit from Drosophila melanogaster (Fruit fly).